Here is a 311-residue protein sequence, read N- to C-terminus: 4-hydroxy-tetrahydrodipicolinate synthase (311 aa).

Thr51 is a binding site for pyruvate. Tyr140 (proton donor/acceptor) is an active-site residue. Lys168 functions as the Schiff-base intermediate with substrate in the catalytic mechanism. A pyruvate-binding site is contributed by Ile209.

This sequence belongs to the DapA family. Homotetramer; dimer of dimers.

It localises to the cytoplasm. The catalysed reaction is L-aspartate 4-semialdehyde + pyruvate = (2S,4S)-4-hydroxy-2,3,4,5-tetrahydrodipicolinate + H2O + H(+). It functions in the pathway amino-acid biosynthesis; L-lysine biosynthesis via DAP pathway; (S)-tetrahydrodipicolinate from L-aspartate: step 3/4. In terms of biological role, catalyzes the condensation of (S)-aspartate-beta-semialdehyde [(S)-ASA] and pyruvate to 4-hydroxy-tetrahydrodipicolinate (HTPA). The protein is 4-hydroxy-tetrahydrodipicolinate synthase of Streptococcus suis (strain 98HAH33).